Consider the following 304-residue polypeptide: Recombination-associated protein RdgC (304 aa).

Belongs to the RdgC family.

It localises to the cytoplasm. Its subcellular location is the nucleoid. Its function is as follows. May be involved in recombination. The protein is Recombination-associated protein RdgC of Dechloromonas aromatica (strain RCB).